The primary structure comprises 274 residues: 3-methyl-2-oxobutanoate hydroxymethyltransferase (274 aa).

Residues Asp-49 and Asp-88 each contribute to the Mg(2+) site. Residues 49-50, Asp-88, and Lys-118 contribute to the 3-methyl-2-oxobutanoate site; that span reads DS. A Mg(2+)-binding site is contributed by Glu-120. Glu-187 acts as the Proton acceptor in catalysis.

It belongs to the PanB family. As to quaternary structure, homodecamer; pentamer of dimers. Requires Mg(2+) as cofactor.

Its subcellular location is the cytoplasm. The catalysed reaction is 3-methyl-2-oxobutanoate + (6R)-5,10-methylene-5,6,7,8-tetrahydrofolate + H2O = 2-dehydropantoate + (6S)-5,6,7,8-tetrahydrofolate. It functions in the pathway cofactor biosynthesis; (R)-pantothenate biosynthesis; (R)-pantoate from 3-methyl-2-oxobutanoate: step 1/2. In terms of biological role, catalyzes the reversible reaction in which hydroxymethyl group from 5,10-methylenetetrahydrofolate is transferred onto alpha-ketoisovalerate to form ketopantoate. This is 3-methyl-2-oxobutanoate hydroxymethyltransferase from Rhodopseudomonas palustris (strain HaA2).